We begin with the raw amino-acid sequence, 403 residues long: Dynactin subunit 2-B (403 aa).

The interval 1-26 (MADPKYADLPGIARNEPDLYETSDLP) is disordered. Positions 99–132 (PQQKYQRLLHEVQELTQEVEKTQSTLKESATEEK) form a coiled coil. The segment at 183 to 206 (AAKTRKDPEGKSSAKGPGPDNENL) is disordered. Positions 184–194 (AKTRKDPEGKS) are enriched in basic and acidic residues. A coiled-coil region spans residues 381 to 401 (KENLATVEDNFSSIDGRIKKL).

It belongs to the dynactin subunit 2 family. As to quaternary structure, subunit of dynactin, a multiprotein complex part of a tripartite complex with dynein and a adapter, such as BICDL1, BICD2 or HOOK3. The dynactin complex is built around ACTR1A/ACTB filament and consists of an actin-related filament composed of a shoulder domain, a pointed end and a barbed end. Its length is defined by its flexible shoulder domain. The soulder is composed of 2 DCTN1 subunits, 4 DCTN2 and 2 DCTN3.

Its subcellular location is the cytoplasm. It is found in the cytoskeleton. The protein localises to the microtubule organizing center. It localises to the centrosome. The protein resides in the membrane. In terms of biological role, part of the dynactin complex that activates the molecular motor dynein for ultra-processive transport along microtubules. In the dynactin soulder domain, binds the ACTR1A filament and acts as a molecular ruler to determine the length. Modulates cytoplasmic dynein binding to an organelle, and plays a role in prometaphase chromosome alignment and spindle organization during mitosis. Involved in anchoring microtubules to centrosomes. The sequence is that of Dynactin subunit 2-B (dctn2-b) from Xenopus laevis (African clawed frog).